The primary structure comprises 175 residues: Urease accessory protein UreE (175 aa).

A disordered region spans residues 134 to 175 (FQPESGAYGGGHHHGDESATDLHNPGHGPHRSVPKIHEFKPR).

This sequence belongs to the UreE family.

Its subcellular location is the cytoplasm. Involved in urease metallocenter assembly. Binds nickel. Probably functions as a nickel donor during metallocenter assembly. The protein is Urease accessory protein UreE of Dechloromonas aromatica (strain RCB).